Here is a 645-residue protein sequence, read N- to C-terminus: Chaperone protein DnaK (645 aa).

Position 200 is a phosphothreonine; by autocatalysis (Thr200). Positions 603–645 are disordered; sequence AYSAQKDSGTSTDSTASDTSGNPEERVVDSEYQEIKKDDEDKK. Residues 609–623 are compositionally biased toward low complexity; the sequence is DSGTSTDSTASDTSG. Basic and acidic residues predominate over residues 625–645; it reads PEERVVDSEYQEIKKDDEDKK.

Belongs to the heat shock protein 70 family.

In terms of biological role, acts as a chaperone. The polypeptide is Chaperone protein DnaK (Anaplasma marginale (strain St. Maries)).